We begin with the raw amino-acid sequence, 630 residues long: METTPLNSQKVLSECKDKEDCQENGVLQKGVPTPADKAGPGQISNGYSAVPSTSAGDEAPHSTPAATTTLVAEIHQGERETWGKKMDFLLSVIGYAVDLGNIWRFPYICYQNGGGAFLLPYTIMAIFGGIPLFYMELALGQYHRNGCISIWKKICPIFKGIGYAICIIAFYIASYYNTIIAWALYYLISSFTDQLPWTSCKNSWNTGNCTNYFAQDNITWTLHSTSPAEEFYLRHVLQIHQSKGLQDLGTISWQLALCIMLIFTIIYFSIWKGVKTSGKVVWVTATFPYIVLSVLLVRGATLPGAWRGVVFYLKPNWQKLLETGVWVDAAAQIFFSLGPGFGVLLAFASYNKFNNNCYQDALVTSVVNCMTSFVSGFVIFTVLGYMAEMRNEDVSEVAKDAGPSLLFITYAEAIANMPASTFFAIIFFLMLITLGLDSTFAGLEGVITAVLDEFPHIWAKRREWFVLIVVITCILGSLLTLTSGGAYVVTLLEEYATGPAVLTVALIEAVVVSWFYGITQFCSDVKEMLGFSPGWFWRICWVAISPLFLLFIICSFLMSPPQLRLFQYNYPHWSIILGYCIGTSSVICIPIYIIYRLISTPGTLKERIIKSITPETPTEIPCGDIRMNAV.

Composition is skewed to polar residues over residues methionine 1–valine 11 and glutamine 42–alanine 55. Positions methionine 1–threonine 63 are disordered. Residues methionine 1–aspartate 87 lie on the Cytoplasmic side of the membrane. Tyrosine 47 carries the phosphotyrosine modification. Residues phenylalanine 88–asparagine 112 traverse the membrane as a helical segment. Na(+)-binding residues include glycine 94, alanine 96, valine 97, aspartate 98, and asparagine 101. A serotonin-binding site is contributed by aspartate 98. At glycine 113–glycine 115 the chain is on the extracellular side. The helical transmembrane segment at alanine 116 to methionine 135 threads the bilayer. Topologically, residues glutamate 136 to glycine 160 are cytoplasmic. A Phosphotyrosine modification is found at tyrosine 142. The helical transmembrane segment at isoleucine 161 to tyrosine 186 threads the bilayer. Residues leucine 187–serine 252 are Extracellular-facing. An intrachain disulfide couples cysteine 200 to cysteine 209. Residues asparagine 208 and asparagine 217 are each glycosylated (N-linked (GlcNAc...) asparagine). The helical transmembrane segment at tryptophan 253–tryptophan 271 threads the bilayer. Topologically, residues lysine 272–serine 277 are cytoplasmic. Threonine 276 carries the phosphothreonine modification. Residues glycine 278 to valine 297 traverse the membrane as a helical segment. Topologically, residues arginine 298–glycine 324 are extracellular. Residues valine 325–phenylalanine 347 form a helical membrane-spanning segment. Residue serine 336 participates in Na(+) binding. Residues alanine 348 to aspartate 360 are Cytoplasmic-facing. The helical transmembrane segment at alanine 361–phenylalanine 380 threads the bilayer. A Na(+)-binding site is contributed by asparagine 368. Residues threonine 381–threonine 421 lie on the Extracellular side of the membrane. The chain crosses the membrane as a helical span at residues phenylalanine 422–leucine 443. Na(+)-binding residues include leucine 434, aspartate 437, and serine 438. Threonine 439 is a binding site for serotonin. The Cytoplasmic segment spans residues glutamate 444–glutamate 463. A helical transmembrane segment spans residues tryptophan 464 to serine 483. At glycine 484–glutamate 494 the chain is on the extracellular side. Serotonin contacts are provided by glutamate 494 and tyrosine 495. The helical transmembrane segment at tyrosine 495–tyrosine 516 threads the bilayer. The Cytoplasmic segment spans residues glycine 517–arginine 538. Residues isoleucine 539 to methionine 558 form a helical membrane-spanning segment. Serotonin is bound by residues phenylalanine 556 and serine 559. Over serine 559–serine 574 the chain is Extracellular. The chain crosses the membrane as a helical span at residues isoleucine 575 to tyrosine 595. Over arginine 596–valine 630 the chain is Cytoplasmic. Residues threonine 616–aspartate 624 form an interaction with RAB4A region.

It belongs to the sodium:neurotransmitter symporter (SNF) (TC 2.A.22) family. SLC6A4 subfamily. As to quaternary structure, monomer or homooligomer. Interacts (via C-terminus) with SCAMP2; the interaction is direct and retains transporter molecules intracellularly. Interacts with filamentous actin and STX1A. Interacts (via the N-terminus) with STX1A (via the H3 domain); this interaction regulates SLC4A6 channel conductance. Interacts with SEC23A, SEC24C and PATJ. Interacts with NOS1; the interaction may diminish the cell surface localization of SERT in the brain and, correspondingly, reduce serotonin reuptake. Interacts with TGFB1I1. Interacts with ITGAV:ITGB3. Interacts (via C-terminus) with ITGB3; this interaction regulates SLC6A4 trafficking. In terms of processing, phosphorylation at Thr-276 increases 5-HT uptake and is required for cGMP-mediated SERT regulation. In terms of tissue distribution, expressed in the lung, midbrain and brainstem regions. Expressed in brainstem raphe neurons.

Its subcellular location is the cell membrane. The protein resides in the endomembrane system. It is found in the endosome membrane. The protein localises to the synapse. It localises to the cell junction. Its subcellular location is the focal adhesion. The protein resides in the cell projection. It is found in the neuron projection. The catalysed reaction is serotonin(out) + K(+)(in) + Na(+)(out) + H(+)(in) = serotonin(in) + K(+)(out) + Na(+)(in) + H(+)(out). Functionally, serotonin transporter that cotransports serotonin with one Na(+) ion in exchange for one K(+) ion and possibly one proton in an overall electroneutral transport cycle. Transports serotonin across the plasma membrane from the extracellular compartment to the cytosol thus limiting serotonin intercellular signaling. Essential for serotonin homeostasis in the central nervous system. In the developing somatosensory cortex, acts in glutamatergic neurons to control serotonin uptake and its trophic functions accounting for proper spatial organization of cortical neurons and elaboration of sensory circuits. In the mature cortex, acts primarily in brainstem raphe neurons to mediate serotonin uptake from the synaptic cleft back into the pre-synaptic terminal thus terminating serotonin signaling at the synapse. Modulates mucosal serotonin levels in the gastrointestinal tract through uptake and clearance of serotonin in enterocytes. Required for enteric neurogenesis and gastrointestinal reflexes. Regulates blood serotonin levels by ensuring rapid high affinity uptake of serotonin from plasma to platelets, where it is further stored in dense granules via vesicular monoamine transporters and then released upon stimulation. Mechanistically, the transport cycle starts with an outward-open conformation having Na1(+) and Cl(-) sites occupied. The binding of a second extracellular Na2(+) ion and serotonin substrate leads to structural changes to outward-occluded to inward-occluded to inward-open, where the Na2(+) ion and serotonin are released into the cytosol. Binding of intracellular K(+) ion induces conformational transitions to inward-occluded to outward-open and completes the cycle by releasing K(+) possibly together with a proton bound to Asp-98 into the extracellular compartment. Na1(+) and Cl(-) ions remain bound throughout the transport cycle. Additionally, displays serotonin-induced channel-like conductance for monovalent cations, mainly Na(+) ions. The channel activity is uncoupled from the transport cycle and may contribute to the membrane resting potential or excitability. The sequence is that of Sodium-dependent serotonin transporter from Mus musculus (Mouse).